The chain runs to 183 residues: Large ribosomal subunit protein uL5 (183 aa).

This sequence belongs to the universal ribosomal protein uL5 family. In terms of assembly, part of the 50S ribosomal subunit; part of the 5S rRNA/L5/L18/L25 subcomplex. Contacts the 5S rRNA and the P site tRNA. Forms a bridge to the 30S subunit in the 70S ribosome.

This is one of the proteins that bind and probably mediate the attachment of the 5S RNA into the large ribosomal subunit, where it forms part of the central protuberance. In the 70S ribosome it contacts protein S13 of the 30S subunit (bridge B1b), connecting the 2 subunits; this bridge is implicated in subunit movement. Contacts the P site tRNA; the 5S rRNA and some of its associated proteins might help stabilize positioning of ribosome-bound tRNAs. The sequence is that of Large ribosomal subunit protein uL5 from Leptospira biflexa serovar Patoc (strain Patoc 1 / Ames).